Here is a 273-residue protein sequence, read N- to C-terminus: Proteasome subunit beta type-5-B (273 aa).

A propeptide spans 1–57 (removed in mature form); the sequence is MKLDTSGLETTMPVIGFGSNSEMLDGFSSAPSFDLPRTTDFDGFQKKAVEMVKPAKG. Thr-58 (nucleophile) is an active-site residue.

Belongs to the peptidase T1B family. Component of the 20S core complex of the 26S proteasome. The 26S proteasome is composed of a core protease (CP), known as the 20S proteasome, capped at one or both ends by the 19S regulatory particle (RP/PA700). The 20S proteasome core is composed of 28 subunits that are arranged in four stacked rings, resulting in a barrel-shaped structure. The two end rings are each formed by seven alpha subunits, and the two central rings are each formed by seven beta subunits. The catalytic chamber with the active sites is on the inside of the barrel.

It localises to the cytoplasm. The protein localises to the nucleus. It carries out the reaction Cleavage of peptide bonds with very broad specificity.. Functionally, the proteasome is a multicatalytic proteinase complex which is characterized by its ability to cleave peptides with Arg, Phe, Tyr, Leu, and Glu adjacent to the leaving group at neutral or slightly basic pH. The proteasome has an ATP-dependent proteolytic activity. This is Proteasome subunit beta type-5-B (PBE2) from Arabidopsis thaliana (Mouse-ear cress).